A 586-amino-acid polypeptide reads, in one-letter code: Phosphomethylpyrimidine synthase (586 aa).

The segment at 1 to 33 is disordered; sequence MKQSVSAEQIELKSSLPGSKKVYVDGPREGMKV. Over residues 22 to 33 the composition is skewed to basic and acidic residues; it reads VYVDGPREGMKV. Substrate-binding positions include Asn-193, Met-222, Tyr-251, His-287, 307-309, 348-351, and Glu-387; these read SRG and DGLR. His-391 provides a ligand contact to Zn(2+). Substrate is bound at residue Tyr-414. His-455 contacts Zn(2+). Residues Cys-535, Cys-538, and Cys-543 each contribute to the [4Fe-4S] cluster site.

The protein belongs to the ThiC family. [4Fe-4S] cluster is required as a cofactor.

It catalyses the reaction 5-amino-1-(5-phospho-beta-D-ribosyl)imidazole + S-adenosyl-L-methionine = 4-amino-2-methyl-5-(phosphooxymethyl)pyrimidine + CO + 5'-deoxyadenosine + formate + L-methionine + 3 H(+). It participates in cofactor biosynthesis; thiamine diphosphate biosynthesis. Its function is as follows. Catalyzes the synthesis of the hydroxymethylpyrimidine phosphate (HMP-P) moiety of thiamine from aminoimidazole ribotide (AIR) in a radical S-adenosyl-L-methionine (SAM)-dependent reaction. In Bacillus cereus (strain G9842), this protein is Phosphomethylpyrimidine synthase.